The sequence spans 397 residues: Phosphoglycerate kinase (397 aa).

Substrate contacts are provided by residues D21–N23, R36, H59–R62, R114, and R147. ATP contacts are provided by residues K198, E320, and G346 to T349.

Belongs to the phosphoglycerate kinase family. In terms of assembly, monomer.

The protein localises to the cytoplasm. It catalyses the reaction (2R)-3-phosphoglycerate + ATP = (2R)-3-phospho-glyceroyl phosphate + ADP. Its pathway is carbohydrate degradation; glycolysis; pyruvate from D-glyceraldehyde 3-phosphate: step 2/5. In Neisseria gonorrhoeae (strain NCCP11945), this protein is Phosphoglycerate kinase.